A 476-amino-acid chain; its full sequence is MNILFAVSECVPFVKSGGLADVAGALPKELKKLGVEVRIILPNYSLIPQKLRDGCTLHKVINVPLGWRNQYCGILKGEQDGITYYLIDNEYYFKRDSLYGHYDDGERFSYFSKAVLECIPHLDFEVDVLHSHDWHTAMVNFLLREKYQDNPLYEHIKTVYTIHNLQFQGVFPPEVMYDLLELGDEYFHSEQLEFYGNVNFMKGGIIASDQITAVSPTYKEEIQYEFFGEKLDGLLRKYNDKLSGIVNGIDTSVYNPETDSYITAQYDAGSLYEKNENKRALQRYFGLPEKEDTPIISMVTRLTKQKGLDLVRTVFREIMEEDVQCIILGSGDSEYEQFFEWMAYEYPEKVKVYIGFNEELAHQVYAGSDLFLMPSLFEPCGLGQLIALAYGTIPIVRETGGLNDTVQSYDEETGEGNGFSFTNFNAHDMLHTVLRAIEFYHDKPVWEQLVKQAMTEDYSWEKSALAYKKLYKGLME.

Residue lysine 15 participates in ADP-alpha-D-glucose binding.

This sequence belongs to the glycosyltransferase 1 family. Bacterial/plant glycogen synthase subfamily.

The catalysed reaction is [(1-&gt;4)-alpha-D-glucosyl](n) + ADP-alpha-D-glucose = [(1-&gt;4)-alpha-D-glucosyl](n+1) + ADP + H(+). It functions in the pathway glycan biosynthesis; glycogen biosynthesis. In terms of biological role, synthesizes alpha-1,4-glucan chains using ADP-glucose. In Bacillus cereus (strain ZK / E33L), this protein is Glycogen synthase.